The sequence spans 303 residues: HTH-type transcriptional regulator CatM (303 aa).

The HTH lysR-type domain occupies 1 to 58; the sequence is MELRHLRYFVTVVEEQSISKAAEKLCIAQPPLSRQIQKLEEELGIQLFERGFRPAKVT. The H-T-H motif DNA-binding region spans 18-37; the sequence is ISKAAEKLCIAQPPLSRQIQ. S99 and T128 together coordinate cis,cis-muconate.

Belongs to the LysR transcriptional regulatory family. Homotetramer in solution.

In terms of biological role, positively regulates the expression of catA, catBCIJFD and benPK in response to cis,cis-muconate. It binds to the catB-catM intercistronic region, to a specific sequence upstream of catA and to the benPK promoter region. Can also repress pca genes. The protein is HTH-type transcriptional regulator CatM (catM) of Acinetobacter baylyi (strain ATCC 33305 / BD413 / ADP1).